A 367-amino-acid chain; its full sequence is tRNA 2-selenouridine synthase (367 aa).

The Rhodanese domain occupies F15–E138. The active-site S-selanylcysteine intermediate is the C98.

Belongs to the SelU family. Monomer.

The enzyme catalyses 5-methylaminomethyl-2-thiouridine(34) in tRNA + selenophosphate + (2E)-geranyl diphosphate + H2O + H(+) = 5-methylaminomethyl-2-selenouridine(34) in tRNA + (2E)-thiogeraniol + phosphate + diphosphate. The catalysed reaction is 5-methylaminomethyl-2-thiouridine(34) in tRNA + (2E)-geranyl diphosphate = 5-methylaminomethyl-S-(2E)-geranyl-thiouridine(34) in tRNA + diphosphate. It carries out the reaction 5-methylaminomethyl-S-(2E)-geranyl-thiouridine(34) in tRNA + selenophosphate + H(+) = 5-methylaminomethyl-2-(Se-phospho)selenouridine(34) in tRNA + (2E)-thiogeraniol. It catalyses the reaction 5-methylaminomethyl-2-(Se-phospho)selenouridine(34) in tRNA + H2O = 5-methylaminomethyl-2-selenouridine(34) in tRNA + phosphate. In terms of biological role, involved in the post-transcriptional modification of the uridine at the wobble position (U34) of tRNA(Lys), tRNA(Glu) and tRNA(Gln). Catalyzes the conversion of 2-thiouridine (S2U-RNA) to 2-selenouridine (Se2U-RNA). Acts in a two-step process involving geranylation of 2-thiouridine (S2U) to S-geranyl-2-thiouridine (geS2U) and subsequent selenation of the latter derivative to 2-selenouridine (Se2U) in the tRNA chain. In Shewanella denitrificans (strain OS217 / ATCC BAA-1090 / DSM 15013), this protein is tRNA 2-selenouridine synthase.